The primary structure comprises 151 residues: Ribonuclease H (151 aa).

The 143-residue stretch at Met-1–Gln-143 folds into the RNase H type-1 domain. Residues Asp-10, Glu-49, Asp-71, and Asp-135 each coordinate Mg(2+).

It belongs to the RNase H family. In terms of assembly, monomer. Mg(2+) is required as a cofactor.

It localises to the cytoplasm. The catalysed reaction is Endonucleolytic cleavage to 5'-phosphomonoester.. Endonuclease that specifically degrades the RNA of RNA-DNA hybrids. The polypeptide is Ribonuclease H (Mycolicibacterium gilvum (strain PYR-GCK) (Mycobacterium gilvum (strain PYR-GCK))).